The sequence spans 321 residues: Phospho-N-acetylmuramoyl-pentapeptide-transferase (321 aa).

The next 10 membrane-spanning stretches (helical) occupy residues 1-21, 50-70, 76-96, 112-132, 140-160, 176-196, 200-220, 225-245, 250-270, and 300-320; these read MIFI…PILI, MGGL…IIFV, IILL…DDYI, FLAQ…FHLV, IPFV…IVFW, GLAT…SYML, AIGI…PYNL, VFMG…ISIM, LSLI…MLQV, and VVTV…WIGV.

Belongs to the glycosyltransferase 4 family. MraY subfamily. It depends on Mg(2+) as a cofactor.

Its subcellular location is the cell membrane. It carries out the reaction UDP-N-acetyl-alpha-D-muramoyl-L-alanyl-gamma-D-glutamyl-L-lysyl-D-alanyl-D-alanine + di-trans,octa-cis-undecaprenyl phosphate = Mur2Ac(oyl-L-Ala-gamma-D-Glu-L-Lys-D-Ala-D-Ala)-di-trans,octa-cis-undecaprenyl diphosphate + UMP. It participates in cell wall biogenesis; peptidoglycan biosynthesis. Its function is as follows. Catalyzes the initial step of the lipid cycle reactions in the biosynthesis of the cell wall peptidoglycan: transfers peptidoglycan precursor phospho-MurNAc-pentapeptide from UDP-MurNAc-pentapeptide onto the lipid carrier undecaprenyl phosphate, yielding undecaprenyl-pyrophosphoryl-MurNAc-pentapeptide, known as lipid I. The polypeptide is Phospho-N-acetylmuramoyl-pentapeptide-transferase (Staphylococcus epidermidis (strain ATCC 35984 / DSM 28319 / BCRC 17069 / CCUG 31568 / BM 3577 / RP62A)).